The chain runs to 120 residues: Sirohydrochlorin cobaltochelatase (120 aa).

His-9 acts as the Proton acceptor in catalysis. Residue His-9 coordinates Co(2+). Substrate-binding positions include Gln-43 and 68 to 73; that span reads FAAGTH. Position 73 (His-73) interacts with Co(2+).

Belongs to the CbiX family. CbiXS subfamily. In terms of assembly, homotetramer; dimer of dimers.

The enzyme catalyses Co-sirohydrochlorin + 2 H(+) = sirohydrochlorin + Co(2+). It participates in cofactor biosynthesis; adenosylcobalamin biosynthesis; cob(II)yrinate a,c-diamide from sirohydrochlorin (anaerobic route): step 1/10. Its function is as follows. Catalyzes the insertion of Co(2+) into sirohydrochlorin as part of the anaerobic pathway to cobalamin biosynthesis. The sequence is that of Sirohydrochlorin cobaltochelatase from Sulfurisphaera tokodaii (strain DSM 16993 / JCM 10545 / NBRC 100140 / 7) (Sulfolobus tokodaii).